We begin with the raw amino-acid sequence, 171 residues long: Transcription factor E (171 aa).

An HTH TFE/IIEalpha-type domain is found at Asp-5–Val-91.

It belongs to the TFE family. As to quaternary structure, monomer. Interaction with RNA polymerase subunits RpoF and RpoE is necessary for Tfe stimulatory transcription activity. Able to interact with Tbp and RNA polymerase in the absence of DNA promoter. Interacts both with the preinitiation and elongation complexes.

Transcription factor that plays a role in the activation of archaeal genes transcribed by RNA polymerase. Facilitates transcription initiation by enhancing TATA-box recognition by TATA-box-binding protein (Tbp), and transcription factor B (Tfb) and RNA polymerase recruitment. Not absolutely required for transcription in vitro, but particularly important in cases where Tbp or Tfb function is not optimal. It dynamically alters the nucleic acid-binding properties of RNA polymerases by stabilizing the initiation complex and destabilizing elongation complexes. Seems to translocate with the RNA polymerase following initiation and acts by binding to the non template strand of the transcription bubble in elongation complexes. This chain is Transcription factor E, found in Methanocella arvoryzae (strain DSM 22066 / NBRC 105507 / MRE50).